The primary structure comprises 147 residues: Transcriptional regulator MraZ (147 aa).

2 SpoVT-AbrB domains span residues 5–47 and 76–123; these read QQLR…SEKE and TFEI…SKSK.

The protein belongs to the MraZ family. In terms of assembly, forms oligomers.

It localises to the cytoplasm. The protein resides in the nucleoid. The polypeptide is Transcriptional regulator MraZ (Mycoplasmopsis synoviae (strain 53) (Mycoplasma synoviae)).